A 440-amino-acid chain; its full sequence is D-serine dehydratase (440 aa).

The residue at position 116 (Lys116) is an N6-(pyridoxal phosphate)lysine.

This sequence belongs to the serine/threonine dehydratase family. DsdA subfamily. Monomer. The cofactor is pyridoxal 5'-phosphate.

It catalyses the reaction D-serine = pyruvate + NH4(+). This is D-serine dehydratase from Salmonella agona (strain SL483).